A 199-amino-acid polypeptide reads, in one-letter code: ATP-dependent Clp protease proteolytic subunit (199 aa).

The active-site Nucleophile is the serine 98. Histidine 123 is an active-site residue.

It belongs to the peptidase S14 family. In terms of assembly, fourteen ClpP subunits assemble into 2 heptameric rings which stack back to back to give a disk-like structure with a central cavity, resembling the structure of eukaryotic proteasomes.

The protein localises to the cytoplasm. The enzyme catalyses Hydrolysis of proteins to small peptides in the presence of ATP and magnesium. alpha-casein is the usual test substrate. In the absence of ATP, only oligopeptides shorter than five residues are hydrolyzed (such as succinyl-Leu-Tyr-|-NHMec, and Leu-Tyr-Leu-|-Tyr-Trp, in which cleavage of the -Tyr-|-Leu- and -Tyr-|-Trp bonds also occurs).. Cleaves peptides in various proteins in a process that requires ATP hydrolysis. Has a chymotrypsin-like activity. Plays a major role in the degradation of misfolded proteins. The chain is ATP-dependent Clp protease proteolytic subunit from Clostridium botulinum (strain Eklund 17B / Type B).